Reading from the N-terminus, the 324-residue chain is MKKKWKPSASIKDLMKRSKIIADIRSFFLKKNIMEVETPILSQSGVTDVNLMPFITNYFSFNDNIKKKNLWLITSPEYHMKRLLSAGSGSIYQICRSFRNQEFGQYHNPEFTMLEWYQLSCSMEKMIEEIDFFFQKILNFNKADKISYQEVFMKFLKIDPLSTSLSELFQCYKKFNLKNLIYLENDLNQLIENIFTLQIQPFLGKEKPLFVYHFPSEQACLASINKKDSRVSERFEIFFKGIELGNGFHELTDYFEQRKRFIKDNRKRCDMNLPEQKIDDYFLDAIHHGLPTCSGVAIGLDRLIMIALNKNSIDQVMSFSFERS.

Position 75–77 (75–77 (SPE)) interacts with substrate. ATP is bound by residues 99-101 (RNQ) and asparagine 108. Tyrosine 117 is a binding site for substrate. 243-244 (EL) is an ATP binding site. Glutamate 250 provides a ligand contact to substrate. Glycine 299 lines the ATP pocket.

This sequence belongs to the class-II aminoacyl-tRNA synthetase family. EpmA subfamily. Homodimer.

It carries out the reaction D-beta-lysine + L-lysyl-[protein] + ATP = N(6)-((3R)-3,6-diaminohexanoyl)-L-lysyl-[protein] + AMP + diphosphate + H(+). Its function is as follows. With EpmB is involved in the beta-lysylation step of the post-translational modification of translation elongation factor P (EF-P). Catalyzes the ATP-dependent activation of (R)-beta-lysine produced by EpmB, forming a lysyl-adenylate, from which the beta-lysyl moiety is then transferred to the epsilon-amino group of a conserved specific lysine residue in EF-P. This is Elongation factor P--(R)-beta-lysine ligase from Buchnera aphidicola subsp. Schizaphis graminum (strain Sg).